The following is a 577-amino-acid chain: Endopolyphosphatase (577 aa).

Over 1-2 the chain is Cytoplasmic; the sequence is MR. Residues 3–23 traverse the membrane as a helical; Signal-anchor for type II membrane protein segment; the sequence is PSVITVAVLFVQSTWASFAFG. The Vacuolar segment spans residues 24–577; that stretch reads NPMSMRNKAH…YIGSISDFED (554 aa). N-linked (GlcNAc...) asparagine glycans are attached at residues N363, N370, N375, and N399. The interval 430–460 is disordered; it reads SDYEIDKKKKKKKKNNKKKKKNKRKNIKPGP. Over residues 437–456 the composition is skewed to basic residues; the sequence is KKKKKKKNNKKKKKNKRKNI. N-linked (GlcNAc...) asparagine glycosylation occurs at N481.

The protein belongs to the endopolyphosphatase PPN1 family. It depends on a divalent metal cation as a cofactor. Processing by proteases in the vacuole may be required for activation.

Its subcellular location is the vacuole membrane. The catalysed reaction is [phosphate](n+1) + n H2O = (n+1) phosphate + n H(+). Its function is as follows. Catalyzes the hydrolysis of inorganic polyphosphate (polyP) chains of many hundreds of phosphate residues into shorter lengths. In Schizosaccharomyces pombe (strain 972 / ATCC 24843) (Fission yeast), this protein is Endopolyphosphatase (ppn1).